Consider the following 542-residue polypeptide: GMP synthase [glutamine-hydrolyzing] (542 aa).

In terms of domain architecture, Glutamine amidotransferase type-1 spans 28–218 (MIVILDFGSQ…VYHICECEPT (191 aa)). Cys105 acts as the Nucleophile in catalysis. Residues His192 and Glu194 contribute to the active site. In terms of domain architecture, GMPS ATP-PPase spans 219–417 (WTTEAFVEEA…IGLPEEIVRR (199 aa)). 246 to 252 (SGGVDSS) is an ATP binding site.

As to quaternary structure, homodimer.

The enzyme catalyses XMP + L-glutamine + ATP + H2O = GMP + L-glutamate + AMP + diphosphate + 2 H(+). It functions in the pathway purine metabolism; GMP biosynthesis; GMP from XMP (L-Gln route): step 1/1. Its function is as follows. Catalyzes the synthesis of GMP from XMP. The polypeptide is GMP synthase [glutamine-hydrolyzing] (Gloeothece citriformis (strain PCC 7424) (Cyanothece sp. (strain PCC 7424))).